A 312-amino-acid polypeptide reads, in one-letter code: Glycine--tRNA ligase alpha subunit (312 aa).

This sequence belongs to the class-II aminoacyl-tRNA synthetase family. Tetramer of two alpha and two beta subunits.

The protein resides in the cytoplasm. It carries out the reaction tRNA(Gly) + glycine + ATP = glycyl-tRNA(Gly) + AMP + diphosphate. The protein is Glycine--tRNA ligase alpha subunit (glyQ) of Buchnera aphidicola subsp. Acyrthosiphon pisum (strain APS) (Acyrthosiphon pisum symbiotic bacterium).